A 278-amino-acid polypeptide reads, in one-letter code: Probable endonuclease 4 (278 aa).

Residues His-66, His-106, Glu-140, Asp-172, His-175, His-209, Asp-222, His-224, and Glu-254 each coordinate Zn(2+).

Belongs to the AP endonuclease 2 family. It depends on Zn(2+) as a cofactor.

The catalysed reaction is Endonucleolytic cleavage to 5'-phosphooligonucleotide end-products.. In terms of biological role, endonuclease IV plays a role in DNA repair. It cleaves phosphodiester bonds at apurinic or apyrimidinic (AP) sites, generating a 3'-hydroxyl group and a 5'-terminal sugar phosphate. The protein is Probable endonuclease 4 of Haloquadratum walsbyi (strain DSM 16790 / HBSQ001).